Reading from the N-terminus, the 134-residue chain is D-dopachrome decarboxylase-like protein (134 aa).

Belongs to the MIF family.

The protein localises to the cytoplasm. Its function is as follows. May have lyase activity. In Homo sapiens (Human), this protein is D-dopachrome decarboxylase-like protein (DDTL).